Consider the following 137-residue polypeptide: Nucleoside diphosphate kinase (137 aa).

ATP contacts are provided by Lys-9, Phe-57, Arg-85, Thr-91, Arg-102, and Asn-112. His-115 serves as the catalytic Pros-phosphohistidine intermediate.

This sequence belongs to the NDK family. In terms of assembly, homotetramer. It depends on Mg(2+) as a cofactor.

The protein resides in the cytoplasm. It catalyses the reaction a 2'-deoxyribonucleoside 5'-diphosphate + ATP = a 2'-deoxyribonucleoside 5'-triphosphate + ADP. The catalysed reaction is a ribonucleoside 5'-diphosphate + ATP = a ribonucleoside 5'-triphosphate + ADP. Its function is as follows. Major role in the synthesis of nucleoside triphosphates other than ATP. The ATP gamma phosphate is transferred to the NDP beta phosphate via a ping-pong mechanism, using a phosphorylated active-site intermediate. The protein is Nucleoside diphosphate kinase of Aliarcobacter butzleri (strain RM4018) (Arcobacter butzleri).